A 385-amino-acid chain; its full sequence is Serine/threonine-protein kinase 52 (385 aa).

The 275-residue stretch at 82-356 (LIIKTVLARG…PEMDEVVPML (275 aa)) folds into the Protein kinase domain. Residues 88–96 (LARGTFGTV) and Lys-109 contribute to the ATP site. Residue Asp-227 is the Proton acceptor of the active site.

The protein belongs to the protein kinase superfamily. Ser/Thr protein kinase family. Binds to CBC1. Associates with PHOT1, PHOT2, BLUS1 and PM H(+)-ATPase (e.g. AHA1). Autophosphorylated. Phosphorylated by HT1 in response to low CO(2) concentrations. As to expression, expressed in guard cells.

It is found in the cytoplasm. The protein localises to the cytosol. It catalyses the reaction L-seryl-[protein] + ATP = O-phospho-L-seryl-[protein] + ADP + H(+). The enzyme catalyses L-threonyl-[protein] + ATP = O-phospho-L-threonyl-[protein] + ADP + H(+). In terms of biological role, serine/threonine protein kinase that phosphorylates proteins on serine and threonine residues. Collectively with CBC1, acts as a negative regulator of stomatal opening, probably via the inhibition of plasma membrane-type ATPases (AHA1 and AHA2) activity in guard cells, but in an abscisic acid (ABA)-independent manner. However, at low concentrations of CO(2), together with CBC1, stimulates stomatal opening via the inhibition of S-type anion channels in response to blue light (BL) and red light (RL), thus being a key component to maximize photosynthesis in the light under low CO(2) conditions. Required for temperature decrease in leaves. Downstream target of HIGH LEAF TEMPERATURE1 (HT1) during low CO(2)-induced stomatal opening. The sequence is that of Serine/threonine-protein kinase 52 from Arabidopsis thaliana (Mouse-ear cress).